Here is a 71-residue protein sequence, read N- to C-terminus: Large ribosomal subunit protein uL29 (71 aa).

It belongs to the universal ribosomal protein uL29 family.

This Synechococcus sp. (strain RCC307) protein is Large ribosomal subunit protein uL29.